Consider the following 631-residue polypeptide: Probable potassium transport system protein Kup (631 aa).

12 helical membrane passes run 17-37 (IGLL…SPLY), 56-76 (ILGV…FKYM), 109-129 (MMMV…SMIT), 147-167 (GLDH…FLIQ), 174-194 (IGVL…ALGV), 215-235 (FFII…LALT), 256-276 (WFIL…ALVL), 288-308 (LLAP…ATII), 346-366 (IYIG…VIGF), 378-398 (VAVT…MLML), 403-423 (PLLA…FFAA), and 428-448 (IFQG…LMTT).

This sequence belongs to the HAK/KUP transporter (TC 2.A.72) family.

The protein localises to the cell inner membrane. The enzyme catalyses K(+)(in) + H(+)(in) = K(+)(out) + H(+)(out). In terms of biological role, transport of potassium into the cell. Likely operates as a K(+):H(+) symporter. The chain is Probable potassium transport system protein Kup from Pseudomonas syringae pv. tomato (strain ATCC BAA-871 / DC3000).